We begin with the raw amino-acid sequence, 462 residues long: Cytochrome c biogenesis protein CcsB (462 aa).

The next 3 membrane-spanning stretches (helical) occupy residues L30–I50, T89–R109, and I175–A195.

It belongs to the Ccs1/CcsB family. In terms of assembly, may interact with CcsA.

The protein localises to the cellular thylakoid membrane. Its function is as follows. Required during biogenesis of c-type cytochromes (cytochrome c6 and cytochrome f) at the step of heme attachment. The protein is Cytochrome c biogenesis protein CcsB of Picosynechococcus sp. (strain ATCC 27264 / PCC 7002 / PR-6) (Agmenellum quadruplicatum).